We begin with the raw amino-acid sequence, 518 residues long: Protein translocase subunit SecD (518 aa).

The next 6 membrane-spanning stretches (helical) occupy residues 9 to 29 (IVLS…NFIQ), 356 to 376 (GKKA…LSYG), 377 to 397 (VIGL…LALL), 406 to 426 (LPGI…NVLI), 463 to 483 (LIVA…FAVA), and 486 to 506 (IGII…IDVW).

The protein belongs to the SecD/SecF family. SecD subfamily. Forms a complex with SecF. Part of the essential Sec protein translocation apparatus which comprises SecA, SecYEG and auxiliary proteins SecDF-YajC and YidC.

Its subcellular location is the cell inner membrane. Its function is as follows. Part of the Sec protein translocase complex. Interacts with the SecYEG preprotein conducting channel. SecDF uses the proton motive force (PMF) to complete protein translocation after the ATP-dependent function of SecA. This Rickettsia prowazekii (strain Madrid E) protein is Protein translocase subunit SecD.